The primary structure comprises 335 residues: Methylthioribose-1-phosphate isomerase (335 aa).

Substrate-binding positions include 47-49 (RGA), arginine 81, and glutamine 184. Aspartate 225 serves as the catalytic Proton donor. 235–236 (NK) contacts substrate.

Belongs to the eIF-2B alpha/beta/delta subunits family. MtnA subfamily.

The catalysed reaction is 5-(methylsulfanyl)-alpha-D-ribose 1-phosphate = 5-(methylsulfanyl)-D-ribulose 1-phosphate. It functions in the pathway amino-acid biosynthesis; L-methionine biosynthesis via salvage pathway; L-methionine from S-methyl-5-thio-alpha-D-ribose 1-phosphate: step 1/6. Functionally, catalyzes the interconversion of methylthioribose-1-phosphate (MTR-1-P) into methylthioribulose-1-phosphate (MTRu-1-P). In Synechococcus sp. (strain CC9902), this protein is Methylthioribose-1-phosphate isomerase.